The sequence spans 206 residues: Small ribosomal subunit protein uS4 (206 aa).

The region spanning methionine 98–proline 164 is the S4 RNA-binding domain.

It belongs to the universal ribosomal protein uS4 family. In terms of assembly, part of the 30S ribosomal subunit. Contacts protein S5. The interaction surface between S4 and S5 is involved in control of translational fidelity.

Functionally, one of the primary rRNA binding proteins, it binds directly to 16S rRNA where it nucleates assembly of the body of the 30S subunit. Its function is as follows. With S5 and S12 plays an important role in translational accuracy. The chain is Small ribosomal subunit protein uS4 from Clostridium tetani (strain Massachusetts / E88).